A 287-amino-acid polypeptide reads, in one-letter code: ATP synthase gamma chain (287 aa).

Belongs to the ATPase gamma chain family. F-type ATPases have 2 components, CF(1) - the catalytic core - and CF(0) - the membrane proton channel. CF(1) has five subunits: alpha(3), beta(3), gamma(1), delta(1), epsilon(1). CF(0) has three main subunits: a, b and c.

The protein localises to the cell inner membrane. Its function is as follows. Produces ATP from ADP in the presence of a proton gradient across the membrane. The gamma chain is believed to be important in regulating ATPase activity and the flow of protons through the CF(0) complex. In Serratia proteamaculans (strain 568), this protein is ATP synthase gamma chain.